Reading from the N-terminus, the 481-residue chain is Tryptophan--tRNA ligase, cytoplasmic (481 aa).

Positions 12-68 constitute a WHEP-TRS domain; sequence SPLELFNSIAAQGELVRSLKAGNAPKDEIESAVKMLLSLKMNYKTAMGEEYKAGCPP. Positions 65-85 are disordered; sequence GCPPGNSTAGSNGDPDATKAS. The residue at position 158 (Lys-158) is an N6-succinyllysine. Positions 168 to 177 match the 'HIGH' region motif; sequence PSSEAMHLGH. Positions 353–357 match the 'KMSKS' region motif; the sequence is KMSAS. Ser-355 carries the phosphoserine modification.

It belongs to the class-I aminoacyl-tRNA synthetase family. As to quaternary structure, homodimer. Interacts with oxidized form of GAPDH. Post-translationally, proteolytic cleavage generates 2 forms; T1-TrpRS and T2-TrpRS.

The protein resides in the cytoplasm. The enzyme catalyses tRNA(Trp) + L-tryptophan + ATP = L-tryptophyl-tRNA(Trp) + AMP + diphosphate + H(+). Its function is as follows. Catalyzes the attachment of tryptophan to tRNA(Trp) in a two-step reaction: tryptophan is first activated by ATP to form Trp-AMP and then transferred to the acceptor end of the tRNA(Trp). Could also possess an angiostatic activity. In Rattus norvegicus (Rat), this protein is Tryptophan--tRNA ligase, cytoplasmic.